The following is a 398-amino-acid chain: Phosphoglycerate kinase (398 aa).

Substrate contacts are provided by residues 21-23, R36, 59-62, R117, and R150; these read DFN and HFGR. Residues K200, E321, and 351–354 contribute to the ATP site; that span reads GGDS.

The protein belongs to the phosphoglycerate kinase family. As to quaternary structure, monomer.

The protein localises to the cytoplasm. The catalysed reaction is (2R)-3-phosphoglycerate + ATP = (2R)-3-phospho-glyceroyl phosphate + ADP. It participates in carbohydrate degradation; glycolysis; pyruvate from D-glyceraldehyde 3-phosphate: step 2/5. This Wolbachia sp. subsp. Drosophila simulans (strain wRi) protein is Phosphoglycerate kinase.